We begin with the raw amino-acid sequence, 1025 residues long: MTRRILPLSLVFIPLSCISASETDTLKLPNLTFGGREIEFIVTPPSSIAAQYITYANVSNYRGNFTISSCTQDQWFSRGLSTTNSSGAFVESMTSFTAIDNADLFFCNNYCTHQGGGGAINATGLISFKNNQNILFYNNTTIGTQFTGVALRTERNRGGALYGSSIELINNHSLNFINNTSGDMGGAVSTIQNLVIKNTSGIVAFENNHTTDHIPNTFATILARGGAVGCQGACEISHNTGPVVFNSNYGGYGGAISTGGQCIFRDNKDKLIFINNSALGWHNTSAQGNGAVISAGGEFGLLNNKGPIYFENNNASYIAGAISCNNLNFQENGPIYFLNNSALYGGAFHLFASPAANYIHTGSGDIIFNNNTELSTTGMSAGLRKLFYIPGTTNNNPITLSLGAKKDTRIYFYDLFQWGGLKKANTPPENSPHTVTINPSDEFSGAVVFSYKNISSDLQAHMIASKTHNQIKDSPTTLKFGTMSIENGAEFEFFNGPLTQESTSLLALGQDSILTVGKDASLTITHLGIILPGLLNDQGTTAPRIRVNPQDMTQNTNSNQAPVSTENVATQKIFFSGLVSLVDENYESVYDSCDLSRGKANQPILHIETTNDAQLSNDWKNTLNTSLYSLPHYGYQGLWTSNWMTTTRTVSLTNSTETQTANNSIQEQKNTSETFDSNSTTTAKIPSIRASTGGTTPLATTDVTVTRHSLVVSWTPIGYIADPARRGDLIANNLVSSGRNTTLYLRSLLPDDSWFALQGSAATLFTKQQKRLDYHGYSSASKGYAISSQASGAHGHKFLFSFSQSSDTMKEKRTNNKISSRYYLSALCFEQPMFDRIALIGAAAYNYGTHKTYNFYGTKKFSKGNFHSTTLGGSLRCELRDSMPFQSIMLTPFIQALISRTEPASIQEQGDLARLFSLKQPHTAVVSPIGIKGVYSSNKWPTVSCEMEVAYQPTLYWKRPILNTVLIKNNGSWETTNTPLAKHSFYGRGSSSLKFSYLKLFANYQAQVATSTVSHYMNAGGALVF.

Residues 1-20 form the signal peptide; that stretch reads MTRRILPLSLVFIPLSCISA. A disordered region spans residues 654 to 681; the sequence is NSTETQTANNSIQEQKNTSETFDSNSTT. Positions 659–681 are enriched in polar residues; that stretch reads QTANNSIQEQKNTSETFDSNSTT. The Autotransporter domain maps to 748 to 1025; that stretch reads LLPDDSWFAL…YMNAGGALVF (278 aa).

This sequence belongs to the PMP outer membrane protein family.

It localises to the secreted. The protein localises to the cell wall. It is found in the cell outer membrane. This Chlamydia muridarum (strain MoPn / Nigg) protein is Probable outer membrane protein PmpF (pmpF).